A 288-amino-acid chain; its full sequence is 30 kDa spicule matrix protein (288 aa).

A signal peptide spans 1–20; the sequence is MRCFVYVLVCVVASVSYSRA. The region spanning 93 to 163 is the C-type lectin domain; that stretch reads ANMYCGQMHP…YTNWEGMVAP (71 aa). Asn-103 is a glycosylation site (N-linked (GlcNAc...) asparagine).

In terms of tissue distribution, spines and tube feet.

In terms of biological role, matrix protein of the sea urchin embryo spicule. The function of the matrix proteins is to direct crystal growth in certain orientations and inhibit growth in others. This Hemicentrotus pulcherrimus (Sea urchin) protein is 30 kDa spicule matrix protein (SM30).